Here is a 437-residue protein sequence, read N- to C-terminus: Rhoptry apical surface protein 2 (437 aa).

The 135-residue stretch at 45 to 179 (GCLGSLFFYL…PRINLSLHKL (135 aa)) folds into the C2 domain. A PH domain is found at 230–338 (EGPLERLNAN…FIEKLRAYRE (109 aa)). A disordered region spans residues 341-437 (STRVPSQKGA…SVVGDEEPQT (97 aa)). A compositionally biased stretch (basic residues) spans 375-384 (RKSGGKKSRR).

In terms of assembly, interacts with RASP1. Interacts with RASP3.

The protein localises to the cytoplasmic vesicle. It is found in the secretory vesicle. Its subcellular location is the rhoptry membrane. In terms of biological role, essential for tachyzoite invasion of host cells by controlling rhoptry secretion. Binds to phosphatidic acid (PA) and phosphatidylinositol 4,5-bisphosphate (PIP2) lipids and thus, likely contributes to the assembly of the machinery that docks or primes the rhoptry to the parasite cell membrane prior to the fusion with the host cell membrane. The sequence is that of Rhoptry apical surface protein 2 from Toxoplasma gondii (strain ATCC 50853 / GT1).